We begin with the raw amino-acid sequence, 172 residues long: Nicotinamide-nucleotide adenylyltransferase (172 aa).

The protein belongs to the archaeal NMN adenylyltransferase family.

It is found in the cytoplasm. The enzyme catalyses beta-nicotinamide D-ribonucleotide + ATP + H(+) = diphosphate + NAD(+). It functions in the pathway cofactor biosynthesis; NAD(+) biosynthesis; NAD(+) from nicotinamide D-ribonucleotide: step 1/1. The polypeptide is Nicotinamide-nucleotide adenylyltransferase (Methanococcus aeolicus (strain ATCC BAA-1280 / DSM 17508 / OCM 812 / Nankai-3)).